Consider the following 25-residue polypeptide: Large ribosomal subunit protein uL29 (25 aa).

Belongs to the universal ribosomal protein uL29 family.

This chain is Large ribosomal subunit protein uL29 (rpmC), found in Brevundimonas vesicularis (Pseudomonas vesicularis).